The following is a 186-amino-acid chain: ATP synthase subunit delta (186 aa).

The protein belongs to the ATPase delta chain family. F-type ATPases have 2 components, F(1) - the catalytic core - and F(0) - the membrane proton channel. F(1) has five subunits: alpha(3), beta(3), gamma(1), delta(1), epsilon(1). CF(0) has four main subunits: a(1), b(1), b'(1) and c(10-14). The alpha and beta chains form an alternating ring which encloses part of the gamma chain. F(1) is attached to F(0) by a central stalk formed by the gamma and epsilon chains, while a peripheral stalk is formed by the delta, b and b' chains.

Its subcellular location is the cell inner membrane. Its function is as follows. F(1)F(0) ATP synthase produces ATP from ADP in the presence of a proton or sodium gradient. F-type ATPases consist of two structural domains, F(1) containing the extramembraneous catalytic core and F(0) containing the membrane proton channel, linked together by a central stalk and a peripheral stalk. During catalysis, ATP synthesis in the catalytic domain of F(1) is coupled via a rotary mechanism of the central stalk subunits to proton translocation. This protein is part of the stalk that links CF(0) to CF(1). It either transmits conformational changes from CF(0) to CF(1) or is implicated in proton conduction. This is ATP synthase subunit delta from Cereibacter sphaeroides (strain ATCC 17025 / ATH 2.4.3) (Rhodobacter sphaeroides).